We begin with the raw amino-acid sequence, 231 residues long: Cutinase 2 (231 aa).

Residues 1–16 (MKFFALTTLLAATASA) form the signal peptide. The cysteines at positions 48 and 126 are disulfide-linked. The active-site Nucleophile is the S137. Cysteines 188 and 195 form a disulfide. D192 is a catalytic residue. The active-site Proton donor/acceptor is the H205.

The protein belongs to the cutinase family. The 2 disulfide bonds play a critical role in holding the catalytic residues in juxta-position; reduction of the disulfide bridges results in the complete inactivation of the enzyme.

The protein localises to the secreted. It carries out the reaction cutin + H2O = cutin monomers.. In terms of biological role, catalyzes the hydrolysis of complex carboxylic polyesters found in the cell wall of plants. Degrades cutin, a macromolecule that forms the structure of the plant cuticle. Allows pathogenic fungi to penetrate through the cuticular barrier into the host plant during the initial stage of fungal infection. The chain is Cutinase 2 (CUT2) from Fusarium vanettenii (Neocosmospora pisi).